The sequence spans 238 residues: DnaA regulatory inactivator Hda (238 aa).

Belongs to the DnaA family. HdA subfamily. The active form seems to be an ADP-bound monomer. Forms the RIDA complex (regulatory inactivation of DnaA) of ATP-DnaA, ADP-Hda and the DNA-loaded beta sliding clamp (dnaN).

Functionally, mediates the interaction of DNA replication initiator protein DnaA with DNA polymerase subunit beta sliding clamp (dnaN). Stimulates hydrolysis of ATP-DnaA to ADP-DnaA, rendering DnaA inactive for reinitiation, a process called regulatory inhibition of DnaA or RIDA. This Pectobacterium atrosepticum (strain SCRI 1043 / ATCC BAA-672) (Erwinia carotovora subsp. atroseptica) protein is DnaA regulatory inactivator Hda.